The sequence spans 145 residues: UPF0201 protein STK_09490 (145 aa).

This sequence belongs to the UPF0201 family.

This is UPF0201 protein STK_09490 from Sulfurisphaera tokodaii (strain DSM 16993 / JCM 10545 / NBRC 100140 / 7) (Sulfolobus tokodaii).